Reading from the N-terminus, the 195-residue chain is Exosome complex component CSL4 (195 aa).

Phosphoserine occurs at positions 21 and 98. The region spanning 66–147 is the S1 motif domain; it reads DVGAIVTCKV…AQSNYLLTTA (82 aa).

The protein belongs to the CSL4 family. As to quaternary structure, component of the RNA exosome core complex (Exo-9), composed of EXOSC1, EXOSC2, EXOSC3, EXOSC4, EXOSC5, EXOSC6, EXOSC7, EXOSC8 and EXOSC9; within the complex interacts with EXOSC6. The catalytically inactive RNA exosome core complex (Exo-9) associates with the catalytic subunit EXOSC10/RRP6. Exo-9 may associate with DIS3 to form the nucleolar exosome complex, or DIS3L to form the cytoplasmic exosome complex. Exo-9 is formed by a hexameric base ring consisting of the heterodimers EXOSC4-EXOSC9, EXOSC5-EXOSC8 and EXOSC6-EXOSC7, and a cap ring consisting of EXOSC1, EXOSC2 and EXOSC3. The RNA exosome complex associates with cofactors C1D/RRP47, MPHOSPH6/MPP6 and MTREX/MTR4. Interacts with DDX60.

Its subcellular location is the nucleus. The protein resides in the nucleolus. The protein localises to the cytoplasm. Non-catalytic component of the RNA exosome complex which has 3'-&gt;5' exoribonuclease activity and participates in a multitude of cellular RNA processing and degradation events. In the nucleus, the RNA exosome complex is involved in proper maturation of stable RNA species such as rRNA, snRNA and snoRNA, in the elimination of RNA processing by-products and non-coding 'pervasive' transcripts, such as antisense RNA species and promoter-upstream transcripts (PROMPTs), and of mRNAs with processing defects, thereby limiting or excluding their export to the cytoplasm. The RNA exosome may be involved in Ig class switch recombination (CSR) and/or Ig variable region somatic hypermutation (SHM) by targeting AICDA deamination activity to transcribed dsDNA substrates. In the cytoplasm, the RNA exosome complex is involved in general mRNA turnover and specifically degrades inherently unstable mRNAs containing AU-rich elements (AREs) within their 3' untranslated regions, and in RNA surveillance pathways, preventing translation of aberrant mRNAs. It seems to be involved in degradation of histone mRNA. The catalytic inactive RNA exosome core complex of 9 subunits (Exo-9) is proposed to play a pivotal role in the binding and presentation of RNA for ribonucleolysis, and to serve as a scaffold for the association with catalytic subunits and accessory proteins or complexes. EXOSC1 as peripheral part of the Exo-9 complex stabilizes the hexameric ring of RNase PH-domain subunits through contacts with EXOSC6 and EXOSC8. The sequence is that of Exosome complex component CSL4 (EXOSC1) from Homo sapiens (Human).